Reading from the N-terminus, the 259-residue chain is Virulence plasmid ParA family protein pGP5-D (259 aa).

Residue Phe9 to Thr16 coordinates ATP.

The protein belongs to the ParA family.

The sequence is that of Virulence plasmid ParA family protein pGP5-D from Chlamydia psittaci (Chlamydophila psittaci).